The following is a 217-amino-acid chain: Claudin-9 (217 aa).

Over 1-12 (MASTGLELLGMT) the chain is Cytoplasmic. A helical transmembrane segment spans residues 13-33 (LAVLGWLGTLVSCALPLWKVT). Residues 34–81 (AFIGNSIVVAQVVWEGLWMSCVVQSTGQMQCKVYDSLLALPQDLQAAR) are Extracellular-facing. Residues 82–102 (ALCVVALLLALLGLLVAITGA) traverse the membrane as a helical segment. Residues 103–116 (QCTTCVEDEGAKAR) are Cytoplasmic-facing. A helical membrane pass occupies residues 117–137 (IVLTAGVLLLLSGILVLIPVC). At 138–159 (WTAHAIIQDFYNPLVAEALKRE) the chain is on the extracellular side. Residues 160 to 180 (LGASLYLGWAAAALLMLGGGL) form a helical membrane-spanning segment. Topologically, residues 181 to 217 (LCCTCPPSHFERPRGPRLGYSIPSRSGASGLDKRDYV) are cytoplasmic.

Belongs to the claudin family. In terms of assembly, interacts with CLDN1, CD81 and OCLN.

Its subcellular location is the cell junction. It is found in the tight junction. The protein resides in the cell membrane. In terms of biological role, plays a major role in tight junction-specific obliteration of the intercellular space, through calcium-independent cell-adhesion activity. The protein is Claudin-9 (Cldn9) of Mus musculus (Mouse).